A 280-amino-acid chain; its full sequence is Large ribosomal subunit protein uL2 (280 aa).

Disordered regions lie at residues 27–59 (STPEKSLVRPLHGRGGRNAHGRITTRHKGGGHK) and 225–280 (VMNP…KHSR). Basic residues-rich tracts occupy residues 37 to 59 (LHGRGGRNAHGRITTRHKGGGHK) and 268 to 280 (IVRRRRTGKKHSR).

It belongs to the universal ribosomal protein uL2 family. Part of the 50S ribosomal subunit. Forms a bridge to the 30S subunit in the 70S ribosome.

Functionally, one of the primary rRNA binding proteins. Required for association of the 30S and 50S subunits to form the 70S ribosome, for tRNA binding and peptide bond formation. It has been suggested to have peptidyltransferase activity; this is somewhat controversial. Makes several contacts with the 16S rRNA in the 70S ribosome. The sequence is that of Large ribosomal subunit protein uL2 from Mycobacterium bovis (strain ATCC BAA-935 / AF2122/97).